Here is a 183-residue protein sequence, read N- to C-terminus: DELTA-miturgitoxin-Cp1c (183 aa).

Residues 1-20 (MKFSLFFSVFFLAVLHACLS) form the signal peptide. The propeptide occupies 21–47 (ESEIDLEDEEHFMSSDSFLSEIQDESR). Positions 44 to 47 (DESR) match the Processing quadruplet motif motif. 8 disulfides stabilise this stretch: C51–C66, C58–C75, C65–C88, C77–C86, C115–C130, C122–C139, C129–C157, and C141–C155. Positions 164–177 (QAIEGALRIAKKLI) are predicted alpha-helix. At W181 the chain carries Tryptophan amide.

Belongs to the neurotoxin 19 (CSTX) family. Double-CSTX subfamily. Cleavage of the propeptide depends on the processing quadruplet motif (XXXR, with at least one of X being E). In terms of tissue distribution, expressed by the venom gland.

It is found in the secreted. It localises to the target cell membrane. Spider venom toxin that exhibits cytolytic activity by forming an alpha-helix across the membrane. Lethal to insect larvae. Causes instant paralysis and death in the larvae of the flesh fly (S.carnaria) at doses of 20 ug/g, at doses of less than 10 ug/g causes reversible paralysis. Has cytolytic activity against insect Sf9 cells. Causes stable and irreversible depolarization of fly muscle fibers, leading to contracture at higher toxin concentrations. Destabilizes membranes. The polypeptide is DELTA-miturgitoxin-Cp1c (Cheiracanthium punctorium (Yellow sac spider)).